The chain runs to 2149 residues: Serine/threonine-protein kinase WNK2 (2149 aa).

Residues 1–10 are compositionally biased toward basic and acidic residues; it reads MDGDGGRRDA. 2 disordered regions span residues 1–75 and 87–183; these read MDGD…QRRV and ERAR…EDDL. An omega-N-methylarginine mark is found at Arg-19 and Arg-30. Ser-45 bears the Phosphoserine mark. Pro residues predominate over residues 95–114; sequence APAPAAPAAPPGSPSVPSDP. Over residues 161-172 the composition is skewed to basic and acidic residues; that stretch reads AKPEPGRARKDE. Residues 173-182 show a composition bias toward acidic residues; the sequence is PEEEEDDEDD. Positions 195 to 453 constitute a Protein kinase domain; sequence LKFDIELGRG…IKDLLSHAFF (259 aa). ATP-binding positions include Ser-205, 275-278, and Lys-325; that span reads TELM. The active-site Proton acceptor is the Asp-342. A phosphoserine; by autocatalysis mark is found at Ser-352 and Ser-356. Phosphoserine is present on Ser-560. Disordered regions lie at residues 578-630, 703-728, and 1067-1133; these read HAQS…DSQS, SMSFTPVLPPPSTPVPTGPSQPAPPV, and QEEQ…ERAS. Polar residues predominate over residues 605 to 625; the sequence is ASVTSLASDSTFDSGQGSTVY. Residues 709–728 are compositionally biased toward pro residues; that stretch reads VLPPPSTPVPTGPSQPAPPV. Polar residues predominate over residues 1081–1092; that stretch reads QSSESFGGSDVT. Ser-1098 is modified (phosphoserine). The segment covering 1115-1126 has biased composition (basic residues); the sequence is ARKHHRRSTRAR. At Ser-1210 the chain carries Phosphoserine. Disordered regions lie at residues 1211-1234 and 1270-1502; these read EDTDADHGSDTGTSPPHLGTCGLA and PATD…GFVD. 2 stretches are compositionally biased toward low complexity: residues 1275-1292 and 1317-1353; these read SESSPPLPLSSLQPEASQ and SQAGSSNPPGGASAPLAPSSPPVTTVIPAAPATSTVP. Residues 1386–1400 are compositionally biased toward polar residues; sequence RSAQCTAQPLSTGQG. Pro residues predominate over residues 1470–1485; sequence LPSPPLGPTAPPPPPS. Residues Ser-1507, Ser-1566, and Ser-1594 each carry the phosphoserine modification. Disordered stretches follow at residues 1521–1727 and 1739–1778; these read VPTS…PSSP and ASSIEVGVEEPASSDSGDERPRRRSQVQKQSSLPGTGGVA. The span at 1553 to 1567 shows a compositional bias: polar residues; it reads SDKTPSLTQQTQPSL. The segment covering 1587 to 1597 has biased composition (low complexity); it reads SSPMTAESSSS. Polar residues predominate over residues 1610-1629; the sequence is ASDSSTAPSVPQDASGSSVP. A phosphoserine mark is found at Ser-1725, Ser-1726, Ser-1770, and Ser-1797. A compositionally biased stretch (polar residues) spans 1916–1928; it reads ASSTGHLSDSSRG. The tract at residues 1916–1947 is disordered; that stretch reads ASSTGHLSDSSRGPPTKDPRGTKAVQTQQPCS. At Ser-1962 the chain carries Phosphoserine. The segment covering 2018 to 2031 has biased composition (polar residues); it reads SSLYDSPGSSTSSL. Disordered stretches follow at residues 2018-2044 and 2122-2149; these read SSLYDSPGSSTSSLAPGPEPGPQPTLH and GPLSTTATPGATPALPVPIPDPESEKPD. The span at 2122-2135 shows a compositional bias: low complexity; the sequence is GPLSTTATPGATPA.

This sequence belongs to the protein kinase superfamily. Ser/Thr protein kinase family. WNK subfamily. In terms of assembly, forms a complex with the phosphorylated form of STK39 in the brain. The cofactor is Mg(2+). In terms of processing, autophosphorylated. Autophosphorylation at Ser-352 and Ser-356 promotes its activity. As to expression, brain and heart.

It is found in the cytoplasm. It localises to the cell membrane. It catalyses the reaction L-seryl-[protein] + ATP = O-phospho-L-seryl-[protein] + ADP + H(+). The enzyme catalyses L-threonyl-[protein] + ATP = O-phospho-L-threonyl-[protein] + ADP + H(+). With respect to regulation, activation requires autophosphorylation of Ser-356 and, to a lower extent, Ser-352. Its function is as follows. Serine/threonine-protein kinase component of the WNK2-SPAK/OSR1 kinase cascade, which plays an important role in the regulation of electrolyte homeostasis, cell signaling, survival, and proliferation. The WNK2-SPAK/OSR1 kinase cascade is composed of WNK2, which mediates phosphorylation and activation of downstream kinases OXSR1/OSR1 and STK39/SPAK. Following activation, OXSR1/OSR1 and STK39/SPAK catalyze phosphorylation of ion cotransporters, regulating their activity. Acts as an activator and inhibitor of sodium-coupled chloride cotransporters and potassium-coupled chloride cotransporters respectively. Activates SLC12A2, SCNN1A, SCNN1B, SCNN1D and SGK1 and inhibits SLC12A5. Negatively regulates the EGF-induced activation of the ERK/MAPK-pathway and the downstream cell cycle progression. Affects MAPK3/MAPK1 activity by modulating the activity of MAP2K1 and this modulation depends on phosphorylation of MAP2K1 by PAK1. WNK2 acts by interfering with the activity of PAK1 by controlling the balance of the activity of upstream regulators of PAK1 activity, RHOA and RAC1, which display reciprocal activity. The chain is Serine/threonine-protein kinase WNK2 from Mus musculus (Mouse).